The chain runs to 488 residues: Ribulose bisphosphate carboxylase large chain (488 aa).

2 residues coordinate substrate: Asn-127 and Thr-177. Catalysis depends on Lys-179, which acts as the Proton acceptor. Residue Lys-181 coordinates substrate. Mg(2+)-binding residues include Lys-205, Asp-207, and Glu-208. Lys-205 is modified (N6-carboxylysine). Residue His-297 is the Proton acceptor of the active site. Residues Arg-298, His-330, and Ser-382 each coordinate substrate.

The protein belongs to the RuBisCO large chain family. Type I subfamily. In terms of assembly, heterohexadecamer of 8 large chains and 8 small chains. The cofactor is Mg(2+).

It localises to the plastid. The protein resides in the chloroplast. It carries out the reaction 2 (2R)-3-phosphoglycerate + 2 H(+) = D-ribulose 1,5-bisphosphate + CO2 + H2O. The catalysed reaction is D-ribulose 1,5-bisphosphate + O2 = 2-phosphoglycolate + (2R)-3-phosphoglycerate + 2 H(+). Its function is as follows. RuBisCO catalyzes two reactions: the carboxylation of D-ribulose 1,5-bisphosphate, the primary event in carbon dioxide fixation, as well as the oxidative fragmentation of the pentose substrate in the photorespiration process. Both reactions occur simultaneously and in competition at the same active site. The sequence is that of Ribulose bisphosphate carboxylase large chain from Emiliania huxleyi (Coccolithophore).